The chain runs to 303 residues: Bidirectional sugar transporter SWEET14 (303 aa).

Residues 1–9 are Extracellular-facing; sequence MAGMSLQHP. Residues 10 to 30 form a helical membrane-spanning segment; it reads WAFAFGLLGNIISFMTYLAPL. The 86-residue stretch at 13 to 98 folds into the MtN3/slv 1 domain; sequence AFGLLGNIIS…AVYLVYAPKK (86 aa). Residues 31-44 are Cytoplasmic-facing; sequence PTFYRIYKSKSTQG. The chain crosses the membrane as a helical span at residues 45–65; that stretch reads FQSVPYVVALFSAMLWIYYAL. Residues 66–72 are Extracellular-facing; sequence LKSDECL. Residues 73–93 form a helical membrane-spanning segment; the sequence is LITINSAGCVIETIYIAVYLV. Residues 94–105 lie on the Cytoplasmic side of the membrane; that stretch reads YAPKKAKMFTAK. A helical membrane pass occupies residues 106 to 126; sequence LLLLVNVGVFGLILLLTLLLS. At 127 to 133 the chain is on the extracellular side; it reads AGDRRIV. The helical transmembrane segment at 134–154 threads the bilayer; sequence VLGWVCVGFSVSVFVAPLSII. In terms of domain architecture, MtN3/slv 2 spans 134-217; sequence VLGWVCVGFS…MGLYAMYRNS (84 aa). Residues 155 to 167 lie on the Cytoplasmic side of the membrane; the sequence is RLVVRTKSVEFMP. Residues 168–188 traverse the membrane as a helical segment; that stretch reads FSLSFSLTISAVVWFLYGLLI. Residues 189 to 192 lie on the Extracellular side of the membrane; it reads KDKY. The chain crosses the membrane as a helical span at residues 193–213; sequence VALPNVLGFSFGVIQMGLYAM. Topologically, residues 214 to 303 are cytoplasmic; it reads YRNSTPKAVL…AGAGEKKVAA (90 aa). Residues 266–290 are disordered; sequence HPVDVESPPAEAPPQEDDKAAAATA.

The protein belongs to the SWEET sugar transporter family. In terms of assembly, forms homooligomers and/or heterooligomers.

Its subcellular location is the cell membrane. In terms of biological role, mediates both low-affinity uptake and efflux of sugar across the plasma membrane. This Oryza sativa subsp. indica (Rice) protein is Bidirectional sugar transporter SWEET14 (SWEET14).